The following is a 153-amino-acid chain: Histone H2B.3 (153 aa).

Composition is skewed to basic and acidic residues over residues 1 to 28 (MAPK…EKAL) and 36 to 53 (EKRL…EGRK). The interval 1-61 (MAPKAEKKPA…RKAGRKKAKK (61 aa)) is disordered. N6-acetyllysine occurs at positions 7 and 37. Lysine 149 is covalently cross-linked (Glycyl lysine isopeptide (Lys-Gly) (interchain with G-Cter in ubiquitin)).

It belongs to the histone H2B family. As to quaternary structure, the nucleosome is a histone octamer containing two molecules each of H2A, H2B, H3 and H4 assembled in one H3-H4 heterotetramer and two H2A-H2B heterodimers. The octamer wraps approximately 147 bp of DNA. Can be acetylated to form H2BK6ac and H2BK33ac. In terms of processing, monoubiquitinated by BRE1 to form H2BK143ub1 and deubiquitinated by UBP26. Required for heterochromatic histone H3 di- and trimethylation at H3K4me. May give a specific tag for epigenetic transcriptional activation.

Its subcellular location is the nucleus. It localises to the chromosome. In terms of biological role, core component of nucleosome. Nucleosomes wrap and compact DNA into chromatin, limiting DNA accessibility to the cellular machineries which require DNA as a template. Histones thereby play a central role in transcription regulation, DNA repair, DNA replication and chromosomal stability. DNA accessibility is regulated via a complex set of post-translational modifications of histones, also called histone code, and nucleosome remodeling. The protein is Histone H2B.3 (H2B.3) of Oryza sativa subsp. indica (Rice).